A 165-amino-acid chain; its full sequence is Nucleotide-binding protein TGRD_519 (165 aa).

This sequence belongs to the YajQ family.

Nucleotide-binding protein. This chain is Nucleotide-binding protein TGRD_519, found in Endomicrobium trichonymphae.